The following is a 397-amino-acid chain: Elongation factor Tu-1 (397 aa).

The tr-type G domain occupies K10–E206. Residues G19–T26 are G1. G19–T26 is a GTP binding site. T26 contacts Mg(2+). The tract at residues G62–S66 is G2. The segment at D83–G86 is G3. GTP-binding positions include D83 to H87 and N138 to D141. Residues N138–D141 are G4. Residues S176–L178 form a G5 region.

Belongs to the TRAFAC class translation factor GTPase superfamily. Classic translation factor GTPase family. EF-Tu/EF-1A subfamily. As to quaternary structure, monomer.

It is found in the cytoplasm. It catalyses the reaction GTP + H2O = GDP + phosphate + H(+). Its function is as follows. GTP hydrolase that promotes the GTP-dependent binding of aminoacyl-tRNA to the A-site of ribosomes during protein biosynthesis. The sequence is that of Elongation factor Tu-1 from Streptomyces coelicolor (strain ATCC BAA-471 / A3(2) / M145).